A 221-amino-acid chain; its full sequence is uncharacterized protein (221 aa).

A run of 4 helical transmembrane segments spans residues 41–63 (TGNIRIGLIVLSLIGSYILHSLI), 78–100 (AVMYTISILLIIGLWTNVFSSLS), 141–163 (ILAYDLPNVLVFGCTSLFVISFL), and 178–200 (LILRSFIILILVISTILFLVNLF).

The protein localises to the cell membrane. This is an uncharacterized protein from Archaeoglobus fulgidus (strain ATCC 49558 / DSM 4304 / JCM 9628 / NBRC 100126 / VC-16).